Here is a 164-residue protein sequence, read N- to C-terminus: Cyclic pyranopterin monophosphate synthase (164 aa).

Substrate contacts are provided by residues 75 to 77 (MAH) and 112 to 113 (ME). D127 is an active-site residue.

This sequence belongs to the MoaC family. In terms of assembly, homohexamer; trimer of dimers.

The enzyme catalyses (8S)-3',8-cyclo-7,8-dihydroguanosine 5'-triphosphate = cyclic pyranopterin phosphate + diphosphate. The protein operates within cofactor biosynthesis; molybdopterin biosynthesis. Functionally, catalyzes the conversion of (8S)-3',8-cyclo-7,8-dihydroguanosine 5'-triphosphate to cyclic pyranopterin monophosphate (cPMP). The polypeptide is Cyclic pyranopterin monophosphate synthase (Desulforamulus reducens (strain ATCC BAA-1160 / DSM 100696 / MI-1) (Desulfotomaculum reducens)).